Here is a 61-residue protein sequence, read N- to C-terminus: MKAIIFLFAVLTVVAIIIPIISGEPNAGPLAASIDLKQIMEKVKPDLLKMLDDIKAKIQQG.

The signal sequence occupies residues 1–23; that stretch reads MKAIIFLFAVLTVVAIIIPIISG. The propeptide occupies 24–33; the sequence is EPNAGPLAAS. Q60 is modified (glutamine amide).

This sequence belongs to the formicidae venom clade 2 family. Expressed by the venom gland.

It is found in the secreted. Toxin that causes a rapid and irreversible paralysis when intrathoracically injected into insects (blowflies). Does not cause spontaneous nocifensive behaviors by intraplantar injection in mice. In Pogonomyrmex maricopa (Maricopa harvester ant), this protein is Myrmicitoxin(1)-Pm5a.